Here is a 248-residue protein sequence, read N- to C-terminus: PF03932 family protein CutC (248 aa).

The protein belongs to the CutC family. As to quaternary structure, homodimer.

The protein localises to the cytoplasm. The chain is PF03932 family protein CutC from Escherichia coli (strain SMS-3-5 / SECEC).